We begin with the raw amino-acid sequence, 430 residues long: tRNA(Ile)-lysidine synthase (430 aa).

21–26 is an ATP binding site; the sequence is SGGLDS.

The protein belongs to the tRNA(Ile)-lysidine synthase family.

Its subcellular location is the cytoplasm. The enzyme catalyses cytidine(34) in tRNA(Ile2) + L-lysine + ATP = lysidine(34) in tRNA(Ile2) + AMP + diphosphate + H(+). Functionally, ligates lysine onto the cytidine present at position 34 of the AUA codon-specific tRNA(Ile) that contains the anticodon CAU, in an ATP-dependent manner. Cytidine is converted to lysidine, thus changing the amino acid specificity of the tRNA from methionine to isoleucine. This Salmonella paratyphi A (strain ATCC 9150 / SARB42) protein is tRNA(Ile)-lysidine synthase.